The following is a 142-amino-acid chain: Large ribosomal subunit protein uL13 (142 aa).

It belongs to the universal ribosomal protein uL13 family. As to quaternary structure, part of the 50S ribosomal subunit.

Functionally, this protein is one of the early assembly proteins of the 50S ribosomal subunit, although it is not seen to bind rRNA by itself. It is important during the early stages of 50S assembly. This chain is Large ribosomal subunit protein uL13, found in Pseudomonas syringae pv. tomato (strain ATCC BAA-871 / DC3000).